The sequence spans 413 residues: F-box protein CPR1 (413 aa).

The F-box domain occupies M1–V48.

In terms of assembly, part of a SCF (ASK-cullin-F-box) protein ligase complex. Interacts with SKP1A/ASK1, SPK1B/ASK2, ASK9, ASK10, ASK11, ASK13, ASK14, ASK16, ASK17, ASK18 and ASK19. Interacts with TRAF1B. Expressed in seedling, root, stem, leaves, inflorescence and silique, especially in veins and trichomes.

The protein resides in the cytoplasm. It localises to the nucleus. Its pathway is protein modification; protein ubiquitination. Its function is as follows. Component of SCF(ASK-cullin-F-box) E3 ubiquitin ligase complexes, which may mediate the ubiquitination and subsequent proteasomal degradation of target proteins. Regulates negatively both salicylic acid (SA)-dependent and SA-independent defense signaling. This Arabidopsis thaliana (Mouse-ear cress) protein is F-box protein CPR1 (CPR1).